Reading from the N-terminus, the 683-residue chain is Transforming growth factor-beta-induced protein ig-h3 (683 aa).

A signal peptide spans 1 to 23 (MALLGRLLPLALALALGPAATHA). Position 37 is a phosphoserine (S37). An EMI domain is found at 45 to 99 (GPNVCAVQKLIGTNKKYFTNCKQWYQRKICGKSTVISYECCPGYEKVPGEKGCPA). Intrachain disulfides connect C49/C85, C74/C339, C84/C97, C214/C317, and C473/C478. C65 carries the S-cysteinyl cysteine modification. FAS1 domains are found at residues 103–236 (LSNL…DKVI), 240–371 (TNNI…DELL), 375–498 (SAKT…DRML), and 502–632 (MGTV…NTVL). The Cell attachment site signature appears at 642–644 (RGD).

Binds to type I, II, and IV collagens. Gamma-carboxyglutamated; gamma-carboxyglutamate residues are formed by vitamin K dependent carboxylation; these residues may be required for binding to calcium. According to a report, does not contain any vitamin K-dependent gamma-carboxyglutamate residues. In terms of processing, the EMI domain contains 2 expected intradomain disulfide bridges (Cys-49-Cys85 and Cys-84-Cys-97) and one unusual interdomain disulfide bridge to the second FAS1 domain (Cys-74-Cys-339). This arrangement violates the predicted disulfide bridge pattern of an EMI domain. In terms of tissue distribution, widely distributed in various tissues except for the brain. High levels in corneal epithelium.

The protein localises to the secreted. The protein resides in the extracellular space. Its subcellular location is the extracellular matrix. Plays a role in cell adhesion. May play a role in cell-collagen interactions. In Sus scrofa (Pig), this protein is Transforming growth factor-beta-induced protein ig-h3 (TGFBI).